The following is a 476-amino-acid chain: Sulfate adenylyltransferase subunit 1 (476 aa).

The tr-type G domain occupies 24 to 239; that stretch reads KSMLRFLTCG…VLENVDIDQK (216 aa). A G1 region spans residues 33–40; that stretch reads GSVDDGKS. 33 to 40 lines the GTP pocket; it reads GSVDDGKS. The segment at 91–95 is G2; it reads GITID. The interval 112-115 is G3; that stretch reads DTPG. GTP-binding positions include 112 to 116 and 167 to 170; these read DTPGH and NKMD. The G4 stretch occupies residues 167 to 170; the sequence is NKMD. Residues 205-207 are G5; that stretch reads SAL.

Belongs to the TRAFAC class translation factor GTPase superfamily. Classic translation factor GTPase family. CysN/NodQ subfamily. Heterodimer composed of CysD, the smaller subunit, and CysN.

The enzyme catalyses sulfate + ATP + H(+) = adenosine 5'-phosphosulfate + diphosphate. It participates in sulfur metabolism; hydrogen sulfide biosynthesis; sulfite from sulfate: step 1/3. With CysD forms the ATP sulfurylase (ATPS) that catalyzes the adenylation of sulfate producing adenosine 5'-phosphosulfate (APS) and diphosphate, the first enzymatic step in sulfur assimilation pathway. APS synthesis involves the formation of a high-energy phosphoric-sulfuric acid anhydride bond driven by GTP hydrolysis by CysN coupled to ATP hydrolysis by CysD. In Vibrio atlanticus (strain LGP32) (Vibrio splendidus (strain Mel32)), this protein is Sulfate adenylyltransferase subunit 1.